Here is a 122-residue protein sequence, read N- to C-terminus: Large ribosomal subunit protein uL14 (122 aa).

This sequence belongs to the universal ribosomal protein uL14 family. As to quaternary structure, part of the 50S ribosomal subunit. Forms a cluster with proteins L3 and L19. In the 70S ribosome, L14 and L19 interact and together make contacts with the 16S rRNA in bridges B5 and B8.

Functionally, binds to 23S rRNA. Forms part of two intersubunit bridges in the 70S ribosome. This Shewanella sp. (strain ANA-3) protein is Large ribosomal subunit protein uL14.